The following is a 664-amino-acid chain: Prelamin-A/C (664 aa).

Met1 carries the N-acetylmethionine modification. Residues 1 to 25 (METPSQRRATRSGAQASSTPLSPTR) form a disordered region. The interval 1–33 (METPSQRRATRSGAQASSTPLSPTRITRLQEKE) is head. The interaction with MLIP stretch occupies residues 1 to 130 (METPSQRRAT…TKKEGDLIAA (130 aa)). A Phosphothreonine modification is found at Thr3. Ser5 carries the phosphoserine modification. Thr10 is modified (phosphothreonine). Residues Ser12 and Ser18 each carry the phosphoserine modification. Phosphothreonine is present on Thr19. Ser22 is subject to Phosphoserine; by CDK1. In terms of domain architecture, IF rod spans 31–387 (EKEDLQELND…KLLEGEEERL (357 aa)). Position 32 is an N6-acetyllysine; alternate (Lys32). Position 32 is an N6-succinyllysine; alternate (Lys32). Lys32 is covalently cross-linked (Glycyl lysine isopeptide (Lys-Gly) (interchain with G-Cter in SUMO2); alternate). The coil 1A stretch occupies residues 34 to 70 (DLQELNDRLAVYIDRVRSLETENAGLRLRITESEEVV). 3 positions are modified to phosphoserine: Ser51, Ser66, and Ser71. The interval 71–80 (SREVSGIKAA) is linker 1. N6-acetyllysine occurs at positions 78 and 97. The tract at residues 81-218 (YEAELGDARK…NIYSEELRET (138 aa)) is coil 1B. Lys97 is covalently cross-linked (Glycyl lysine isopeptide (Lys-Gly) (interchain with G-Cter in SUMO2)). Position 107 is a phosphoserine (Ser107). Lys108, Lys114, Lys123, Lys135, Lys144, and Lys155 each carry N6-acetyllysine. Lys171 bears the N6-acetyllysine; alternate mark. An N6-succinyllysine; alternate modification is found at Lys171. Residue Lys171 forms a Glycyl lysine isopeptide (Lys-Gly) (interchain with G-Cter in SUMO2); alternate linkage. Residues Lys180, Lys201, and Lys208 each carry the N6-acetyllysine modification. A Glycyl lysine isopeptide (Lys-Gly) (interchain with G-Cter in SUMO2); alternate cross-link involves residue Lys201. Residue Lys201 forms a Glycyl lysine isopeptide (Lys-Gly) (interchain with G-Cter in SUMO); alternate linkage. Lys208 participates in a covalent cross-link: Glycyl lysine isopeptide (Lys-Gly) (interchain with G-Cter in SUMO2). Phosphoserine is present on Ser212. Residues Lys219 and Lys233 each participate in a glycyl lysine isopeptide (Lys-Gly) (interchain with G-Cter in SUMO2) cross-link. The segment at 219–242 (KRRHETRLVEIDNGKQREFESRLA) is linker 2. Residues Lys233, Lys260, Lys265, and Lys270 each carry the N6-acetyllysine modification. The interval 243–383 (DALQELRAQH…HAYRKLLEGE (141 aa)) is coil 2. Residues 259-331 (YKKELEKTYS…DLEDSLARER (73 aa)) are necessary and sufficient for the interaction with IFFO1. Lys260 is covalently cross-linked (Glycyl lysine isopeptide (Lys-Gly) (interchain with G-Cter in SUMO2); alternate). A Glycyl lysine isopeptide (Lys-Gly) (interchain with G-Cter in SUMO2); alternate cross-link involves residue Lys270. Ser277 bears the Phosphoserine mark. Position 282 is a phosphoserine; by ATR (Ser282). Residues Ser301 and Ser307 each carry the phosphoserine modification. A Glycyl lysine isopeptide (Lys-Gly) (interchain with G-Cter in SUMO2); alternate cross-link involves residue Lys311. N6-acetyllysine is present on residues Lys311, Lys316, and Lys341. Residues Lys366 and Lys378 each participate in a glycyl lysine isopeptide (Lys-Gly) (interchain with G-Cter in SUMO2) cross-link. The tract at residues 384–442 (EERLRLSPSPTSQRSRGRASSHSSQTQGGGSVTKKRKLESTESRSSFSQHARTSGRVAV) is disordered. The segment at 384–664 (EERLRLSPSP…TQSPQNCSIM (281 aa)) is tail. Position 390 is a phosphoserine (Ser390). The residue at position 392 (Ser392) is a Phosphoserine; by CDK1. Ser395 bears the Phosphoserine; by ATR mark. A phosphoserine mark is found at Ser398, Ser403, Ser404, Ser406, Ser407, and Ser414. Position 416 is a phosphothreonine (Thr416). Position 417 is an N6-acetyllysine (Lys417). Glycyl lysine isopeptide (Lys-Gly) (interchain with G-Cter in SUMO2) cross-links involve residues Lys417 and Lys420. Positions 417-422 (KKRKLE) match the Nuclear localization signal motif. Phosphoserine occurs at positions 423, 426, 429, and 431. Residues 426–435 (SRSSFSQHAR) show a composition bias toward polar residues. An LTD domain is found at 428–545 (SSFSQHARTS…EEVAMRKLVR (118 aa)). Residue Lys450 forms a Glycyl lysine isopeptide (Lys-Gly) (interchain with G-Cter in SUMO2); alternate linkage. N6-acetyllysine occurs at positions 450 and 457. Residues Ser458 and Ser463 each carry the phosphoserine modification. Residues Lys470 and Lys486 each participate in a glycyl lysine isopeptide (Lys-Gly) (interchain with G-Cter in SUMO2) cross-link. Lys486 carries the N6-acetyllysine modification. A phosphothreonine mark is found at Thr496, Thr505, and Thr510. 2 positions are modified to phosphoserine: Ser533 and Ser546. Thr548 carries the phosphothreonine modification. The disordered stretch occupies residues 552-576 (DDEDEDGDDLLHHHHGSHCSSSGDP). Residues Ser568 and Ser571 each carry the phosphoserine modification. A Glycyl lysine isopeptide (Lys-Gly) (interchain with G-Cter in SUMO2); alternate cross-link involves residue Lys597. Lys597 is covalently cross-linked (Glycyl lysine isopeptide (Lys-Gly) (interchain with G-Cter in SUMO1); alternate). The tract at residues 598–619 (ASASGSGAQVGGPISSGSSASS) is disordered. A phosphoserine mark is found at Ser612, Ser613, Ser616, and Ser619. Ser625 and Ser628 each carry an O-linked (GlcNAc) serine glycan. 4 positions are modified to phosphoserine: Ser628, Ser632, Ser636, and Ser652. Positions 647–661 (LLGNSSPRTQSPQNC) are cleaved as a propeptide — removed in Lamin-A/C form. A Cysteine methyl ester modification is found at Cys661. Cys661 carries S-farnesyl cysteine lipidation. Residues 662-664 (SIM) constitute a propeptide, removed in Prelamin-A/C form and in Lamin-A/C form.

Belongs to the intermediate filament family. Homodimer of lamin A and lamin C. Lamin dimers then assemble into dimeric head-to-tail polymers. Ultimately, two head-to-tail polymers assemble laterally into a protofilament with a uniformly shaped rod of 3.5 nm in diameter. Interacts with lamin-associated polypeptides IA, IB and TMPO-alpha, RB1 and with emerin. Interacts with SREBF1, SREBF2, SUN2 and TMEM43. Interacts with TMEM201. Proteolytically processed isoform A interacts with NARF. Interacts with SUN1. Interacts with MLIP. Interacts with DMPK; may regulate nuclear envelope stability. Interacts with SUV39H1; the interaction increases stability of SUV39H1. Interacts with SYNE2. Interacts with ITSN1 isoform 2. Interacts with IFFO1; enables the formation of an interior nucleoskeleton that is recruited to DNA double-strand breaks. As to quaternary structure, interacts with EMD. In terms of assembly, interacts (via C-terminus) with LEMD2 (via N-terminus) (in vitro). Proteolytic cleavage of the C-terminal of 18 residues of prelamin-A/C results in the production of lamin-A/C. The prelamin-A/C maturation pathway includes farnesylation of CAAX motif by protein farnesyltransferase (FNTA and FNTB), removal of the last three amino acids (-AAX) by RCE1/FACE2 and/or ZMPSTE24, methylation of the C-terminal cysteine by ICMT and endoproteolytic removal of the last 15 C-terminal amino acids by ZMPSTE24. Proteolytic cleavage requires prior farnesylation and methylation, and absence of these blocks cleavage. In terms of processing, farnesylation of prelamin-A/C facilitates nuclear envelope targeting. Post-translationally, phosphorylation plays a key role in lamin organization, subcellular localization and nuclear envelope disintegration. Phosphorylation by CDK1 at Ser-22 and Ser-392 at the onset of mitosis drives lamin disassembly and nuclear envelope breakdown. Phosphorylation at Ser-22 and Ser-392 during interphase promotes localization to the nucleoplasm and regulates lamina assembly. Phosphorylation at Ser-22, Ser-392 and Ser-628 during interphase causes redistribution between the nucleus and the cytoplasm. Phosphorylation at Ser-22 by CDK1 regulates matrix stiffness. Phosphorylation status of Ser-22 determines its localization between double-strand break (DSB) sites and the nuclear matrix. Phosphorylated by ATR at Ser-282 in response to DNA damage, leading to lamin disassembly and nuclear envelope rupture. Phosphorylation also regulates stability in micronuclei arising from genome instability: phosphorylation at Ser-395 by ATR in response to genome instability and double-stranded DNA breaks primes LMNA for subsequent phosphorylation at Ser-392 by CDK1 and micronuclei envelope rupture. The rupture of micronuclear envelope triggers the cGAS-STING pathway thereby activating the type I interferon response and innate immunity. Acetylation by KAT8 is required for nuclear architecture. In terms of processing, sumoylation is necessary for the localization to the nuclear envelope. In terms of tissue distribution, in the arteries, prelamin-A/C accumulation is not observed in young healthy vessels but is prevalent in medial vascular smooth muscle cells (VSMCs) from aged individuals and in atherosclerotic lesions, where it often colocalizes with senescent and degenerate VSMCs. Prelamin-A/C expression increases with age and disease. In normal aging, the accumulation of prelamin-A/C is caused in part by the down-regulation of ZMPSTE24/FACE1 in response to oxidative stress.

The protein resides in the nucleus lamina. The protein localises to the nucleus envelope. Its subcellular location is the nucleus. It localises to the nucleoplasm. It is found in the nucleus matrix. The protein resides in the nucleus speckle. In terms of biological role, lamins are intermediate filament proteins that assemble into a filamentous meshwork, and which constitute the major components of the nuclear lamina, a fibrous layer on the nucleoplasmic side of the inner nuclear membrane. Lamins provide a framework for the nuclear envelope, bridging the nuclear envelope and chromatin, thereby playing an important role in nuclear assembly, chromatin organization, nuclear membrane and telomere dynamics. Lamin A and C also regulate matrix stiffness by conferring nuclear mechanical properties. The structural integrity of the lamina is strictly controlled by the cell cycle, as seen by the disintegration and formation of the nuclear envelope in prophase and telophase, respectively. Lamin A and C are present in equal amounts in the lamina of mammals. Also invoved in DNA repair: recruited by DNA repair proteins XRCC4 and IFFO1 to the DNA double-strand breaks (DSBs) to prevent chromosome translocation by immobilizing broken DNA ends. Required for normal development of peripheral nervous system and skeletal muscle and for muscle satellite cell proliferation. Required for osteoblastogenesis and bone formation. Also prevents fat infiltration of muscle and bone marrow, helping to maintain the volume and strength of skeletal muscle and bone. Required for cardiac homeostasis. Prelamin-A/C can accelerate smooth muscle cell senescence. It acts to disrupt mitosis and induce DNA damage in vascular smooth muscle cells (VSMCs), leading to mitotic failure, genomic instability, and premature senescence. The polypeptide is Prelamin-A/C (LMNA) (Homo sapiens (Human)).